Reading from the N-terminus, the 156-residue chain is Large ribosomal subunit protein uL15 (156 aa).

Residues 26–46 (GIGCGKGKTSGRGHKGQKARS) form a disordered region. Positions 34–43 (TSGRGHKGQK) are enriched in basic residues.

The protein belongs to the universal ribosomal protein uL15 family. In terms of assembly, part of the 50S ribosomal subunit.

Binds to the 23S rRNA. The sequence is that of Large ribosomal subunit protein uL15 from Ehrlichia canis (strain Jake).